The primary structure comprises 327 residues: Ribosomal RNA small subunit methyltransferase H (327 aa).

S-adenosyl-L-methionine is bound by residues 36–38 (GGH), Asp-61, Phe-88, Asp-114, and Gln-121.

It belongs to the methyltransferase superfamily. RsmH family.

It is found in the cytoplasm. It carries out the reaction cytidine(1402) in 16S rRNA + S-adenosyl-L-methionine = N(4)-methylcytidine(1402) in 16S rRNA + S-adenosyl-L-homocysteine + H(+). Functionally, specifically methylates the N4 position of cytidine in position 1402 (C1402) of 16S rRNA. The chain is Ribosomal RNA small subunit methyltransferase H from Chlorobium phaeovibrioides (strain DSM 265 / 1930) (Prosthecochloris vibrioformis (strain DSM 265)).